Here is a 296-residue protein sequence, read N- to C-terminus: Nucleotide-binding protein Spy49_0545 (296 aa).

13-20 (GMSGAGKT) is a binding site for ATP. Residue 63-66 (DMRS) participates in GTP binding.

It belongs to the RapZ-like family.

Functionally, displays ATPase and GTPase activities. This is Nucleotide-binding protein Spy49_0545 from Streptococcus pyogenes serotype M49 (strain NZ131).